We begin with the raw amino-acid sequence, 408 residues long: Argininosuccinate synthase (408 aa).

ATP-binding positions include 10–18 and Ala37; that span reads AYSGGLDTS. 2 residues coordinate L-citrulline: Tyr90 and Ser95. Residue Gly120 coordinates ATP. Thr122, Asn126, and Asp127 together coordinate L-aspartate. L-citrulline is bound at residue Asn126. L-citrulline is bound by residues Arg130, Ser181, Ser190, Glu266, and Tyr278.

It belongs to the argininosuccinate synthase family. Type 1 subfamily. In terms of assembly, homotetramer.

It localises to the cytoplasm. The enzyme catalyses L-citrulline + L-aspartate + ATP = 2-(N(omega)-L-arginino)succinate + AMP + diphosphate + H(+). Its pathway is amino-acid biosynthesis; L-arginine biosynthesis; L-arginine from L-ornithine and carbamoyl phosphate: step 2/3. The chain is Argininosuccinate synthase from Cereibacter sphaeroides (strain ATCC 17029 / ATH 2.4.9) (Rhodobacter sphaeroides).